We begin with the raw amino-acid sequence, 437 residues long: Adenylosuccinate synthetase, organellar chromatophore (437 aa).

GTP contacts are provided by residues 12-18 (GDEGKGK) and 40-42 (GHT). Asp-13 acts as the Proton acceptor in catalysis. Mg(2+) is bound by residues Asp-13 and Gly-40. IMP contacts are provided by residues 13 to 16 (DEGK), 38 to 41 (NAGH), Thr-128, Arg-142, Gln-223, Thr-238, and Arg-302. Residue His-41 is the Proton donor of the active site. 298 to 304 (TTTGRRR) provides a ligand contact to substrate. GTP-binding positions include Arg-304 and 330-332 (KLD).

The protein belongs to the adenylosuccinate synthetase family. Homodimer. Requires Mg(2+) as cofactor.

It localises to the plastid. It is found in the organellar chromatophore. The enzyme catalyses IMP + L-aspartate + GTP = N(6)-(1,2-dicarboxyethyl)-AMP + GDP + phosphate + 2 H(+). It functions in the pathway purine metabolism; AMP biosynthesis via de novo pathway; AMP from IMP: step 1/2. Plays an important role in the de novo pathway and in the salvage pathway of purine nucleotide biosynthesis. Catalyzes the first committed step in the biosynthesis of AMP from IMP. This Paulinella chromatophora protein is Adenylosuccinate synthetase, organellar chromatophore.